A 143-amino-acid chain; its full sequence is Anti-sigma F factor (143 aa).

It belongs to the anti-sigma-factor family.

The enzyme catalyses L-seryl-[protein] + ATP = O-phospho-L-seryl-[protein] + ADP + H(+). It carries out the reaction L-threonyl-[protein] + ATP = O-phospho-L-threonyl-[protein] + ADP + H(+). Binds to sigma F and blocks its ability to form an RNA polymerase holoenzyme (E-sigma F). Phosphorylates SpoIIAA on a serine residue. This phosphorylation may enable SpoIIAA to act as an anti-anti-sigma factor that counteracts SpoIIAB and thus releases sigma F from inhibition. This chain is Anti-sigma F factor, found in Clostridium beijerinckii (strain ATCC 51743 / NCIMB 8052) (Clostridium acetobutylicum).